The following is a 2346-amino-acid chain: MGDAPIQPQTPAIAVVGMACRLPGSNNSIHAFWNFLKQARQASNTVPESRFNVGAHADGSGKPKTMTSVPGMFLEDIDIGAFDAGFFNISPAEAMAMDPQQRQLLEVAYECLENSGISVDAIFGREMGCFVGSFVGDYADMMARDPEERPTTAATGIGRAILSNRISHFFNLKGPSMTIDTGCSGSLVAVDLACRYLEAGDIESAFVAGSGILHGWADGYAKSEGVNCVMLKNLDSAIRDGDPIRAVIRGWATNSDGYTPGITHPSVDAQVACIKRAYAKAGIEDYSQTGYLECHGTGTPIGDAVETTAIANVFAQSRDDSRPLIIGSVKSNIGHSEAASGLSGLIKSVMAIENGVIPGTPSFITPNPNINFQALRLHVSQTSIPWPLNTIRRASINSFGYGGTNCHLIVEDARLHLGVEQNETYNSSLCSSTSLSLDEDDPRDVVYPRPYIIVLSAVDDDSLTINCKKLLRHLADLHVHLKLPDLSYTLATRRSHHSKRAFAVSNSLNLHARDFMRGQKQFENPRIGFIFTGQGSQWPQMGKDLVRTFPRALEIISEMDAVLQGLPDAPTWSLLDMLVEPHDASRIRQPEISQPLVTAIQLTLVALLEDWNIFPDNVIGHSSGEIAAAYAAGYISKEDAIINAFYRGHAAKVASDSNLSVGMMAVGLGKDEIRPHLEDLADSVYVACVNSPRSITLSGVKTSLEMLRDRLSSVGIFVRILQVDLAYHSPFMKTIGDRYEHSLGQNLPVVGEQPSNTRHTSMFSTVTGEVIKNNPDSQYWRKNMCSPVQFWQGLAAMLSDSEPDLLVEIGPSNTLAGPVRQTNDNLANSSKVEYFSALKRGEDPIGALFDLCGQLYLRGCPIKLERVNRGYEQTNTPPAIVDLPNYGWNHSFSYWNENESSKDWRFRRYLPHDLLGSKILGTTWHTPSWKNTLRLRSLPWLEDHKIGSDVIFPAAGYISMAIEALYQATCAVNEQHAGFSISQLHFSLRNVEFKRAMILDHTSDTRLVLTLESQKGINSWRLFRISSFDGKQWTEHCTGLIRTSEEDSLVQKDLVMPKMIHATPAQVWYRKFADIGYGYGPSFEKMLLVEARVGAAQNRCVISMQAPAAAQSPSFYPIHPTCLDACLQSVFPSLWQGDHTAISTLLLPARIDSLVIHPQPNSINSNVASAKSTYSGRGRLQDRTSWSSDCSLNREEDGKCVLRINGLRFSSVDLGSVQPAAQFWYRSVWCPDITKWSFMPQKHWIPRPNTVNELINWVVHKHGEVSIIELNWDSDDASSLWLDRADHPMRDLTKKYRLLLSDHESLVKSQNLFPNHASSMQMILDRDDPLSGPEWPKMQLVILKSSDCSVHDSSMGRLLGQISEIMSTDGMLVIVAQSLGSDSHSNDARSDSSVFMEHEDRSKSYVPFSHLLSLDLPSSAKHVQLYSRASPAPSCPPQPVALYSFQKTSPISKGLRESLTQNNISLSEVSIHGPETVEIGIGLVVDEIYAPLLCNISSQQWESLKTLFERETPVLWVTQGAQHQVTNPDSSLIYGYLRSLRAEGNASSRFVILDVENGDSPGSRTAITTLLSEMSSSPDRFDHEWEFCERSGIIHVNRIYQDRKLNNLDDIEPAQTSIASCDEKVALHATHLGSLEALQWTQEDTEDSILAPGDVEVKIDVAGLNFKDVALAMGIVHGDEYRLGHEGSGRIQRVGSQTAGYQVGDRVAVFSIGSFANRIQVSTELIHHIPDNMSFEDAATLPLVYSTALYSLLDVANLQANQSVLIHSATGGLGIACIQIAQYIGAKVYATAGTQEKRELLCKEYSIPESQVFSSRDTRFVAGIRGATQGGGVDVIVNTLTGDLLHESWMLCADGGIFVELGKKDIIERNSLSMEPFDRNCSFRAVDLSHKQITDTMKKGLLTRIFDMIKCGNIGPIRPQTTFALNDIQSAFAHMRSARHIGKILILAKDDADTSVPVHSSRRPISIPGDRTYLIVGGLRGLCGSLAICLAQRGAKHITIISRSGCNDERSKAIIADCENLGCRIVDAVGDVTSLQHVKNVFQKADPPIRGVIHGAMVLRDKPIETMSAVDFHQTISSKVKGAWNIHHAAAEQDKSQSLEFFTMLSSISGVVGQKGQANYAAANVFLDSFAAYRCSLGLPAHSLDLGVVDAIGVAAEKGGMERYFNLEHWPRIKESKLHEILCISIDEQKKARYSQLITGLPSGISQLPILSQDARFSILCAEDSQTEGHQPVSPSKDTSSKELYEFRLLVKAMKAKSQLVEKAVTLCGLQLSRLLYLKNQVIDANKSLAAYGLDSLIAIEFRNWLKKELAVEMSTFEVIGASCLHALAEKMVSKVEAGVPVVEVV.

In terms of domain architecture, Ketosynthase family 3 (KS3) spans 10–412 (TPAIAVVGMA…GTNCHLIVED (403 aa)). Active-site for beta-ketoacyl synthase activity residues include Cys-183, His-295, and His-335. The interval 530–842 (IFTGQGSQWP…EYFSALKRGE (313 aa)) is malonyl-CoA:ACP transacylase (MAT) domain. Ser-622 acts as the For malonyltransferase activity in catalysis. The N-terminal hotdog fold stretch occupies residues 912-1048 (HDLLGSKILG…GLIRTSEEDS (137 aa)). Residues 912-1213 (HDLLGSKILG…INGLRFSSVD (302 aa)) are dehydratase (DH) domain. Positions 912–1218 (HDLLGSKILG…FSSVDLGSVQ (307 aa)) constitute a PKS/mFAS DH domain. His-944 (proton acceptor; for dehydratase activity) is an active-site residue. Residues 1060–1218 (IHATPAQVWY…FSSVDLGSVQ (159 aa)) form a C-terminal hotdog fold region. The active-site Proton donor; for dehydratase activity is the Asp-1124. An enoyl reductase (ER) domain region spans residues 1633–1946 (GSLEALQWTQ…SARHIGKILI (314 aa)). The tract at residues 1972 to 2151 (TYLIVGGLRG…HSLDLGVVDA (180 aa)) is ketoreductase (KR) domain. In terms of domain architecture, Carrier spans 2258 to 2336 (SQLVEKAVTL…ALAEKMVSKV (79 aa)). Ser-2296 is modified (O-(pantetheine 4'-phosphoryl)serine).

It depends on pantetheine 4'-phosphate as a cofactor.

Its pathway is secondary metabolite biosynthesis. In terms of biological role, highly reducing polyketide synthase; part of the cla gene cluster that produces clavatol and ortho-quinone methide. The clavatol biosynthesis cluster cla and the terrestric acid cluster tra are both involved in the production of peniphenones and penilactones. The non-reducing PKS claF is responsible for the formation of clavatol from successive condensations of 3 malonyl-CoA units, presumably with a simple acetyl-CoA starter unit, and 2 methylation steps. The esterase claE probably collaborates with claF by catalyzing the hydrolysis of ACP-bound acyl intermediates to free the ACP from stalled intermediates. The clavatol oxidase claD then converts clavatol to hydroxyclavatol. Spontaneous dehydration of hydroxyclavatol leads to the accumulation of the highly active ortho-quinone methide. On the other hand, the PKS-NRPS hybrid traA is involved in the formation of crustosic acid, with the help of traB and traD. The polyketide synthase module (PKS) of traA is responsible for the synthesis of the polyketide backbone via the condensation of an acetyl-CoA starter unit with 3 malonyl-CoA units. The downstream nonribosomal peptide synthetase (NRPS) module then amidates the carboxyl end of the polyketide with L-malic acid. Because traA lacks a designated enoylreductase (ER) domain, the required activity is provided the enoyl reductase traG. Crustosic acid undergoes decarboxylation and isomerization to the terrestric acid, catalyzed by the 2-oxoglutarate-dependent dioxygenase traH. Both acids are further converted to the 2 gamma-butyrolactones (R)-5-methyltetronic acid and (S)-5-carboxylmethyltetronic acid, with involvement of the cytochrome P450 monooxygenase claJ. Spontaneous addition of the methide to these gamma-butyrolactones leads to peniphenone D and penilactone D, which undergo again stereospecific attacking by methide to give penilactones A and B. The function of the highly reducing polyketide synthase claI has not been investigated yet. The chain is Highly reducing polyketide synthase claI from Penicillium crustosum (Blue mold fungus).